We begin with the raw amino-acid sequence, 202 residues long: Adenylate kinase (202 aa).

12–20 (GVPGVGKTT) provides a ligand contact to ATP.

The protein belongs to the archaeal adenylate kinase family.

Its subcellular location is the cytoplasm. The enzyme catalyses AMP + ATP = 2 ADP. This is Adenylate kinase (adkA) from Aeropyrum pernix (strain ATCC 700893 / DSM 11879 / JCM 9820 / NBRC 100138 / K1).